Reading from the N-terminus, the 678-residue chain is Exoribonuclease 2 (678 aa).

The region spanning 193 to 521 (REDLTALPFV…INHRLLKAHI (329 aa)) is the RNB domain. Positions 568-650 (ETRFQAEIFD…ENRSLVGKPT (83 aa)) constitute an S1 motif domain. The tract at residues 659-678 (ETQTSAEQPAEGAENNEPQV) is disordered.

It belongs to the RNR ribonuclease family. RNase II subfamily.

The protein localises to the cytoplasm. It catalyses the reaction Exonucleolytic cleavage in the 3'- to 5'-direction to yield nucleoside 5'-phosphates.. In terms of biological role, involved in mRNA degradation. Hydrolyzes single-stranded polyribonucleotides processively in the 3' to 5' direction. The chain is Exoribonuclease 2 from Vibrio cholerae serotype O1 (strain ATCC 39315 / El Tor Inaba N16961).